Consider the following 204-residue polypeptide: Urease accessory protein UreG (204 aa).

Gly-12 to Thr-19 contributes to the GTP binding site.

Belongs to the SIMIBI class G3E GTPase family. UreG subfamily. In terms of assembly, homodimer. UreD, UreF and UreG form a complex that acts as a GTP-hydrolysis-dependent molecular chaperone, activating the urease apoprotein by helping to assemble the nickel containing metallocenter of UreC. The UreE protein probably delivers the nickel.

The protein localises to the cytoplasm. Functionally, facilitates the functional incorporation of the urease nickel metallocenter. This process requires GTP hydrolysis, probably effectuated by UreG. This is Urease accessory protein UreG from Pseudomonas fluorescens (strain Pf0-1).